A 200-amino-acid chain; its full sequence is 3-isopropylmalate dehydratase small subunit (200 aa).

The protein belongs to the LeuD family. LeuD type 1 subfamily. Heterodimer of LeuC and LeuD.

The enzyme catalyses (2R,3S)-3-isopropylmalate = (2S)-2-isopropylmalate. The protein operates within amino-acid biosynthesis; L-leucine biosynthesis; L-leucine from 3-methyl-2-oxobutanoate: step 2/4. Functionally, catalyzes the isomerization between 2-isopropylmalate and 3-isopropylmalate, via the formation of 2-isopropylmaleate. In Aliivibrio fischeri (strain ATCC 700601 / ES114) (Vibrio fischeri), this protein is 3-isopropylmalate dehydratase small subunit.